Here is a 251-residue protein sequence, read N- to C-terminus: Small ribosomal subunit protein uS2 (251 aa).

The tract at residues 232–251 (LQTGEEEMAAAEGESEQVEA) is disordered. Positions 235-251 (GEEEMAAAEGESEQVEA) are enriched in acidic residues.

It belongs to the universal ribosomal protein uS2 family.

The chain is Small ribosomal subunit protein uS2 from Geobacter metallireducens (strain ATCC 53774 / DSM 7210 / GS-15).